The chain runs to 526 residues: Peptide chain release factor 3 (526 aa).

A tr-type G domain is found at 9-277; sequence ERRRTFAIIS…AFAEYAPPPQ (269 aa). GTP contacts are provided by residues 18–25, 86–90, and 140–143; these read SHPDAGKT, DTPGH, and NKLD.

The protein belongs to the TRAFAC class translation factor GTPase superfamily. Classic translation factor GTPase family. PrfC subfamily.

The protein localises to the cytoplasm. Functionally, increases the formation of ribosomal termination complexes and stimulates activities of RF-1 and RF-2. It binds guanine nucleotides and has strong preference for UGA stop codons. It may interact directly with the ribosome. The stimulation of RF-1 and RF-2 is significantly reduced by GTP and GDP, but not by GMP. The polypeptide is Peptide chain release factor 3 (Methylococcus capsulatus (strain ATCC 33009 / NCIMB 11132 / Bath)).